The sequence spans 171 residues: MSNANSFTKEDLIACGLGKLFGPNSPRLPKDNMLMIDRVLKINADGGEYGKGEIVAELDINPDLWFFDCHFATDPVMPGCLGLDAMWQLVGFFLGWEGAEGKGRALGVGEVKFTGQVLPEAKKVTYKLTIKRKVYRKLVMGIADATMEVDGREIYSAKDLKVGIFTDTTSF.

The active site involves histidine 70.

This sequence belongs to the thioester dehydratase family. FabA subfamily. Homodimer.

Its subcellular location is the cytoplasm. The enzyme catalyses a (3R)-hydroxyacyl-[ACP] = a (2E)-enoyl-[ACP] + H2O. The catalysed reaction is (3R)-hydroxydecanoyl-[ACP] = (2E)-decenoyl-[ACP] + H2O. It carries out the reaction (2E)-decenoyl-[ACP] = (3Z)-decenoyl-[ACP]. It participates in lipid metabolism; fatty acid biosynthesis. Functionally, necessary for the introduction of cis unsaturation into fatty acids. Catalyzes the dehydration of (3R)-3-hydroxydecanoyl-ACP to E-(2)-decenoyl-ACP and then its isomerization to Z-(3)-decenoyl-ACP. Can catalyze the dehydratase reaction for beta-hydroxyacyl-ACPs with saturated chain lengths up to 16:0, being most active on intermediate chain length. The sequence is that of 3-hydroxydecanoyl-[acyl-carrier-protein] dehydratase from Shewanella pealeana (strain ATCC 700345 / ANG-SQ1).